The sequence spans 305 residues: UDP-3-O-acyl-N-acetylglucosamine deacetylase (305 aa).

H79, H238, and D242 together coordinate Zn(2+). H265 (proton donor) is an active-site residue.

It belongs to the LpxC family. Requires Zn(2+) as cofactor.

The catalysed reaction is a UDP-3-O-[(3R)-3-hydroxyacyl]-N-acetyl-alpha-D-glucosamine + H2O = a UDP-3-O-[(3R)-3-hydroxyacyl]-alpha-D-glucosamine + acetate. Its pathway is glycolipid biosynthesis; lipid IV(A) biosynthesis; lipid IV(A) from (3R)-3-hydroxytetradecanoyl-[acyl-carrier-protein] and UDP-N-acetyl-alpha-D-glucosamine: step 2/6. Its function is as follows. Catalyzes the hydrolysis of UDP-3-O-myristoyl-N-acetylglucosamine to form UDP-3-O-myristoylglucosamine and acetate, the committed step in lipid A biosynthesis. The sequence is that of UDP-3-O-acyl-N-acetylglucosamine deacetylase from Histophilus somni (strain 129Pt) (Haemophilus somnus).